Reading from the N-terminus, the 290-residue chain is Type II secretion system protein C (290 aa).

Topologically, residues 1 to 28 (MTLPFRDDLLSSLLARCKTVPLSRFSQP) are cytoplasmic. The chain crosses the membrane as a helical span at residues 29-46 (LFWLLLLLLAHQCAGLTW). Topologically, residues 47–290 (RLLDLGSQQS…LYDVYVGLSE (244 aa)) are periplasmic.

Belongs to the GSP C family.

It localises to the cell inner membrane. In terms of biological role, involved in a type II secretion system (T2SS, formerly general secretion pathway, GSP) for the export of proteins. The protein is Type II secretion system protein C (exeC) of Aeromonas salmonicida.